A 295-amino-acid polypeptide reads, in one-letter code: Iron-sulfur cluster carrier protein (295 aa).

38 to 45 (GKGGVGKS) is an ATP binding site.

The protein belongs to the Mrp/NBP35 ATP-binding proteins family. Homodimer.

In terms of biological role, binds and transfers iron-sulfur (Fe-S) clusters to target apoproteins. Can hydrolyze ATP. The polypeptide is Iron-sulfur cluster carrier protein (Pyrococcus abyssi (strain GE5 / Orsay)).